The primary structure comprises 149 residues: Nucleoside diphosphate kinase (149 aa).

ATP contacts are provided by K9, F57, R85, T91, R102, and N112. Residue H115 is the Pros-phosphohistidine intermediate of the active site.

The protein belongs to the NDK family. As to quaternary structure, homotetramer. Mg(2+) serves as cofactor.

Its subcellular location is the cytoplasm. It catalyses the reaction a 2'-deoxyribonucleoside 5'-diphosphate + ATP = a 2'-deoxyribonucleoside 5'-triphosphate + ADP. The catalysed reaction is a ribonucleoside 5'-diphosphate + ATP = a ribonucleoside 5'-triphosphate + ADP. In terms of biological role, major role in the synthesis of nucleoside triphosphates other than ATP. The ATP gamma phosphate is transferred to the NDP beta phosphate via a ping-pong mechanism, using a phosphorylated active-site intermediate. The sequence is that of Nucleoside diphosphate kinase from Pelotomaculum thermopropionicum (strain DSM 13744 / JCM 10971 / SI).